The following is a 240-amino-acid chain: Methylthioribulose-1-phosphate dehydratase (240 aa).

Over residues 1-17 (MAQEVENNNNDHLVQSS) the composition is skewed to polar residues. The interval 1–20 (MAQEVENNNNDHLVQSSDPE) is disordered. Cysteine 100 contributes to the substrate binding site. Residues histidine 117 and histidine 119 each coordinate Zn(2+). Catalysis depends on glutamate 146, which acts as the Proton donor/acceptor. Histidine 202 serves as a coordination point for Zn(2+).

It belongs to the aldolase class II family. MtnB subfamily. The cofactor is Zn(2+).

The protein localises to the cytoplasm. The enzyme catalyses 5-(methylsulfanyl)-D-ribulose 1-phosphate = 5-methylsulfanyl-2,3-dioxopentyl phosphate + H2O. Its pathway is amino-acid biosynthesis; L-methionine biosynthesis via salvage pathway; L-methionine from S-methyl-5-thio-alpha-D-ribose 1-phosphate: step 2/6. Its function is as follows. Catalyzes the dehydration of methylthioribulose-1-phosphate (MTRu-1-P) into 2,3-diketo-5-methylthiopentyl-1-phosphate (DK-MTP-1-P). This Neosartorya fischeri (strain ATCC 1020 / DSM 3700 / CBS 544.65 / FGSC A1164 / JCM 1740 / NRRL 181 / WB 181) (Aspergillus fischerianus) protein is Methylthioribulose-1-phosphate dehydratase.